The chain runs to 329 residues: SLAM family member 5 (329 aa).

The N-terminal stretch at Met1–Gly21 is a signal peptide. Topologically, residues Lys22–Val221 are extracellular. Positions Pro26–Leu129 constitute an Ig-like V-type domain. An Ig-like C2-type domain is found at Pro132 to Gln206. A glycan (N-linked (GlcNAc...) asparagine) is linked at Asn147. Cys152 and Cys190 are disulfide-bonded. Residues Leu222 to Phe242 form a helical membrane-spanning segment. The Cytoplasmic segment spans residues Arg243–Val329. Positions Thr263 to Val268 match the ITSM 1 motif. Phosphotyrosine is present on Tyr265. The residue at position 280 (Tyr280) is a Phosphotyrosine; by LYN. The ITSM 2 motif lies at Thr298 to Val303. Tyr300 is modified (phosphotyrosine).

In terms of assembly, homodimer; via its extracellular domain. Forms a head to tail dimer with a CD48 molecule from another cell. Interacts with SH2 domain-containing proteins SH2D1A/SAP and SH2D1B/EAT-2. Interacts with tyrosine-protein phosphatases PTPN6/SHP-1 and PTPN11/SHP-2 via its phosphorylated cytoplasmic domain, and this interaction is blocked by SH2D1A. Post-translationally, phosphorylated by tyrosine-protein kinase LCK on tyrosine residues following ligation induced by agonist monoclonal antibody. The association with SH2D1A/SAP is dependent of tyrosine phosphorylation of its cytoplasmic domain. Phosphorylated on Tyr-280 and Tyr-300 following platelet aggregation. Phosphorylated on tyrosine residues upon high affinity immunoglobulin epsilon receptor aggregation in mast cells. N-glycosylated. As to expression, predominantly expressed in hematopoietic tissues such as lymph node, spleen, thymus, and bone marrow. Detected also in lung.

Its subcellular location is the cell membrane. In terms of biological role, self-ligand receptor of the signaling lymphocytic activation molecule (SLAM) family. SLAM receptors triggered by homo- or heterotypic cell-cell interactions are modulating the activation and differentiation of a wide variety of immune cells and thus are involved in the regulation and interconnection of both innate and adaptive immune response. Activities are controlled by presence or absence of small cytoplasmic adapter proteins, SH2D1A/SAP and/or SH2D1B/EAT-2. Can mediate natural killer (NK) cell cytotoxicity dependent on SH2D1A and SH2D1B. Increases proliferative responses of activated T-cells and SH2D1A/SAP does not seen be required for this process. Homophilic interactions enhance interferon gamma/IFNG secretion in lymphocytes and induce platelet stimulation via a SH2D1A/SAP-dependent pathway. May serve as a marker for hematopoietic progenitor cells. Required for a prolonged T-cell:B-cell contact, optimal T follicular helper function, and germinal center formation. In germinal centers involved in maintaining B cell tolerance and in preventing autoimmunity. In mast cells negatively regulates high affinity immunoglobulin epsilon receptor signaling; independent of SH2D1A and SH2D1B but implicating FES and PTPN6/SHP-1. In macrophages enhances LPS-induced MAPK phosphorylation and NF-kappaB activation and modulates LPS-induced cytokine secretion; involving ITSM 2. Positively regulates macroautophagy in primary dendritic cells via stabilization of IRF8; inhibits TRIM21-mediated proteasomal degradation of IRF8. In Mus musculus (Mouse), this protein is SLAM family member 5 (Cd84).